Consider the following 232-residue polypeptide: TIR domain-containing adapter molecule 2 (232 aa).

The span at 1–39 shows a compositional bias: basic and acidic residues; that stretch reads MGVGKSKLDKCPLSWHKKDSVDADQDGHESDSKNSEEAC. Residues 1–70 are disordered; the sequence is MGVGKSKLDK…EAKGAGPEEQ (70 aa). Gly2 carries the N-myristoyl glycine lipid modification. Residues 74–226 form the TIR domain; sequence EFLKFVILHA…SIWKETRSVS (153 aa). Tyr164 carries the post-translational modification Phosphotyrosine.

Homodimer. Interacts with TLR4, TICAM1, IRF3 and IRF7 in response to LPS. Interacts with IL1R1, IL1RAP, IRAK2, IRAK3 and TRAF6. Interacts with protein kinase-inactive mutants of IRAK1 and IRAK4. Isoform 1 interacts with isoform 2; the interaction occurs in late endosomes and disrupts the interaction between isoform 1 and TICAM1. Interacts with MYD88; the interaction decreases after IL-18 stimulation in a time-dependent manner. Interacts with IL18R1 and IL18RAP. Interacts with TLR2. Interacts with RAB11FIP2. In terms of processing, myristoylated. Required for membrane association which is critical for its ability to initiate efficient signaling. Post-translationally, phosphorylated by PRKCE in response to LPS. Phosphorylation is essential for its function. It is depleted from the membrane upon phosphorylation. Tyrosine phosphorylation is inhibited by phosphatase PTPN4.

Its subcellular location is the cytoplasm. The protein localises to the golgi apparatus. The protein resides in the cell membrane. It is found in the early endosome. It localises to the late endosome. Its subcellular location is the endoplasmic reticulum. The protein localises to the cell projection. The protein resides in the phagocytic cup. Functions as a sorting adapter in different signaling pathways to facilitate downstream signaling leading to type I interferon induction. In TLR4 signaling, physically bridges TLR4 and TICAM1 and functionally transmits signal to TICAM1 in early endosomes after endocytosis of TLR4. In TLR2 signaling, physically bridges TLR2 and MYD88 and is required for the TLR2-dependent movement of MYD88 to endosomes following ligand engagement. Involved in IL-18 signaling and is proposed to function as a sorting adapter for MYD88 in IL-18 signaling during adaptive immune response. Forms a complex with RAB11FIP2 that is recruited to the phagosomes to promote the activation of the actin-regulatory GTPases RAC1 and CDC42 and subsequent phagocytosis of Gram-negative bacteria. This is TIR domain-containing adapter molecule 2 (Ticam2) from Mus musculus (Mouse).